The chain runs to 479 residues: Rifampicin monooxygenase (479 aa).

FAD-binding residues include threonine 12, aspartate 31, lysine 32, arginine 41, glutamine 98, valine 122, threonine 156, aspartate 278, leucine 291, and asparagine 292.

It belongs to the rifampicin monooxygenase family. Requires FAD as cofactor.

The catalysed reaction is rifampicin + NADPH + O2 = rifampicin para-naphthoquinone carboxamide + NADP(+) + H2O + H(+). It catalyses the reaction rifampicin + NADH + O2 = rifampicin para-naphthoquinone carboxamide + NAD(+) + H2O + H(+). Its function is as follows. Monooxygenase that can modify rifampicin, thereby inactivating its antibiotic activity. This is Rifampicin monooxygenase from Rhodococcus hoagii (Corynebacterium equii).